Consider the following 137-residue polypeptide: Large ribosomal subunit protein uL16 (137 aa).

This sequence belongs to the universal ribosomal protein uL16 family. In terms of assembly, part of the 50S ribosomal subunit.

In terms of biological role, binds 23S rRNA and is also seen to make contacts with the A and possibly P site tRNAs. The protein is Large ribosomal subunit protein uL16 of Streptococcus equi subsp. zooepidemicus (strain H70).